A 482-amino-acid chain; its full sequence is Cardiolipin synthase (482 aa).

The next 2 helical transmembrane spans lie at 4–24 and 34–54; these read LAYLLVILLILNVFFAAVTVF and WAWLLVLTFVPIFGFIIYLIF. PLD phosphodiesterase domains lie at 217 to 244 and 395 to 422; these read LNYRNHRKLAIIDGDVGYIGGFNIGDEY and DNGFIHAKTLVVDGEIASVGTANMDFRS. Catalysis depends on residues His-222, Lys-224, Asp-229, His-400, Lys-402, and Asp-407.

Belongs to the phospholipase D family. Cardiolipin synthase subfamily.

It localises to the cell membrane. The enzyme catalyses 2 a 1,2-diacyl-sn-glycero-3-phospho-(1'-sn-glycerol) = a cardiolipin + glycerol. In terms of biological role, catalyzes the reversible phosphatidyl group transfer from one phosphatidylglycerol molecule to another to form cardiolipin (CL) (diphosphatidylglycerol) and glycerol. The sequence is that of Cardiolipin synthase (cls) from Listeria monocytogenes serotype 4a (strain HCC23).